Here is a 511-residue protein sequence, read N- to C-terminus: 2-isopropylmalate synthase (511 aa).

The Pyruvate carboxyltransferase domain maps to 6–269 (IIIFDTTLRD…YTDIKCENIF (264 aa)). 4 residues coordinate Mn(2+): Asp15, His203, His205, and Asn239. The regulatory domain stretch occupies residues 394-511 (VLEKLSVISG…SLKVEERKMA (118 aa)).

Belongs to the alpha-IPM synthase/homocitrate synthase family. LeuA type 1 subfamily. As to quaternary structure, homodimer. The cofactor is Mn(2+).

It is found in the cytoplasm. The enzyme catalyses 3-methyl-2-oxobutanoate + acetyl-CoA + H2O = (2S)-2-isopropylmalate + CoA + H(+). Its pathway is amino-acid biosynthesis; L-leucine biosynthesis; L-leucine from 3-methyl-2-oxobutanoate: step 1/4. In terms of biological role, catalyzes the condensation of the acetyl group of acetyl-CoA with 3-methyl-2-oxobutanoate (2-ketoisovalerate) to form 3-carboxy-3-hydroxy-4-methylpentanoate (2-isopropylmalate). The chain is 2-isopropylmalate synthase from Campylobacter jejuni subsp. jejuni serotype O:2 (strain ATCC 700819 / NCTC 11168).